We begin with the raw amino-acid sequence, 260 residues long: Adenosylcobinamide-GDP ribazoletransferase (260 aa).

Helical transmembrane passes span 42 to 62, 64 to 84, 117 to 137, 144 to 164, 192 to 212, 214 to 234, and 240 to 260; these read PLAG…ANAI, LPPL…TGAL, FAAL…MAII, YALL…LAFW, GLGL…VALI, ALVL…AKIG, and TLGA…VMAL.

Belongs to the CobS family. The cofactor is Mg(2+).

It is found in the cell inner membrane. The catalysed reaction is alpha-ribazole + adenosylcob(III)inamide-GDP = adenosylcob(III)alamin + GMP + H(+). The enzyme catalyses alpha-ribazole 5'-phosphate + adenosylcob(III)inamide-GDP = adenosylcob(III)alamin 5'-phosphate + GMP + H(+). Its pathway is cofactor biosynthesis; adenosylcobalamin biosynthesis; adenosylcobalamin from cob(II)yrinate a,c-diamide: step 7/7. In terms of biological role, joins adenosylcobinamide-GDP and alpha-ribazole to generate adenosylcobalamin (Ado-cobalamin). Also synthesizes adenosylcobalamin 5'-phosphate from adenosylcobinamide-GDP and alpha-ribazole 5'-phosphate. The protein is Adenosylcobinamide-GDP ribazoletransferase of Brucella melitensis biotype 1 (strain ATCC 23456 / CCUG 17765 / NCTC 10094 / 16M).